The following is a 199-amino-acid chain: dITP/XTP pyrophosphatase (199 aa).

8–13 (SGNAGK) contacts substrate. The active-site Proton acceptor is the Asp69. Residue Asp69 participates in Mg(2+) binding. Residues Ser70, 154–157 (FGYN), Lys177, and 182–183 (HR) contribute to the substrate site.

This sequence belongs to the HAM1 NTPase family. As to quaternary structure, homodimer. Mg(2+) is required as a cofactor.

The catalysed reaction is XTP + H2O = XMP + diphosphate + H(+). It catalyses the reaction dITP + H2O = dIMP + diphosphate + H(+). The enzyme catalyses ITP + H2O = IMP + diphosphate + H(+). Its function is as follows. Pyrophosphatase that catalyzes the hydrolysis of nucleoside triphosphates to their monophosphate derivatives, with a high preference for the non-canonical purine nucleotides XTP (xanthosine triphosphate), dITP (deoxyinosine triphosphate) and ITP. Seems to function as a house-cleaning enzyme that removes non-canonical purine nucleotides from the nucleotide pool, thus preventing their incorporation into DNA/RNA and avoiding chromosomal lesions. The protein is dITP/XTP pyrophosphatase of Xanthomonas axonopodis pv. citri (strain 306).